The primary structure comprises 537 residues: Small conductance calcium-activated potassium channel protein 1 (537 aa).

Over residues 1–10 the composition is skewed to polar residues; that stretch reads MSSHSHNGSV. The interval 1 to 90 is disordered; sequence MSSHSHNGSV…GKPPTVSHRL (90 aa). Residues 65–76 show a composition bias toward acidic residues; sequence QEEEEEEEEEED. A helical membrane pass occupies residues 108–128; the sequence is LIFGMFGIVVMVTETELSWGV. A helical transmembrane segment spans residues 137–157; the sequence is FALKCLISLSTVILLGLVILY. The chain crosses the membrane as a helical span at residues 176-196; that stretch reads IAMTWERVSLISLELVVCAIH. A helical transmembrane segment spans residues 225–245; the sequence is VLLSIPMFLRLYLLARVMLLH. Residues 274-294 form a helical membrane-spanning segment; that stretch reads LMTICPGTVLLVFSVSSWIVA. Positions 314–334 form an intramembrane region, pore-forming; sequence FLGAMWLISITFLSIGYGDMV. The segment S6 stretch occupies residues 343–363; the sequence is VCLLTGIMGAGCTALVVAVVA. The tract at residues 381-460 is calmodulin-binding; that stretch reads DTQLTKRVKN…LAELAKAQSI (80 aa).

It belongs to the potassium channel KCNN family. KCa2.1/KCNN1 subfamily. In terms of assembly, homodimer. Heteromultimer with KCNN2 and KCNN3. The complex is composed of 4 channel subunits each of which binds to a calmodulin subunit which regulates the channel activity through calcium-binding. Interacts with calmodulin. As to expression, highest expression in brain and liver with lower levels in heart, testis, kidney and colon. In colon, detected in smooth muscle cells. Expressed in atrial and ventricular myocytes with higher levels in atrial myocytes.

It is found in the membrane. The protein localises to the cytoplasm. The protein resides in the myofibril. It localises to the sarcomere. Its subcellular location is the z line. It carries out the reaction K(+)(in) = K(+)(out). Its activity is regulated as follows. Inhibited by bee venom neurotoxin apamin. Inhibited by d-tubocurarine and tetraethylammonium (TEA). Its function is as follows. Small conductance calcium-activated potassium channel that mediates the voltage-independent transmembrane transfer of potassium across the cell membrane through a constitutive interaction with calmodulin which binds the intracellular calcium allowing its opening. The current is characterized by a voltage-independent activation, an intracellular calcium concentration increase-dependent activation and a single-channel conductance of about 3 picosiemens. Also presents an inwardly rectifying current, thus reducing its already small outward conductance of potassium ions, which is particularly the case when the membrane potential displays positive values, above + 20 mV. Activation is followed by membrane hyperpolarization. Thought to regulate neuronal excitability by contributing to the slow component of synaptic afterhyperpolarization. The sequence is that of Small conductance calcium-activated potassium channel protein 1 from Mus musculus (Mouse).